A 246-amino-acid chain; its full sequence is MYQVSGQRPSGCDAPYGAPSAAPGPAQTLSLLPGLEVVTGSTHPAEAAPEEGSLEEAATPMPQGNGPGIPQGLDSTDLDVPTEAVTCQPQGNPLGCTPLLPNDSGHPSELGGTRRAGNGALGGPKAHRKLQTHPSLASQGSKKSKSSSKSTTSQIPLQAQEDCCVHCILSCLFCEFLTLCNIVLDCATCGSCSSEDSCLCCCCCGSGECADCDLPCDLDCGILDACCESADCLEICMECCGLCFSS.

2 disordered regions span residues 1 to 76 and 91 to 151; these read MYQV…LDST and GNPL…SKST. A compositionally biased stretch (low complexity) spans 14–26; that stretch reads APYGAPSAAPGPA. In terms of domain architecture, MDFI spans 99–246; it reads LLPNDSGHPS…MECCGLCFSS (148 aa).

The protein belongs to the MDFI family. Interacts (via C-terminus) with AXIN1 and LEF1. Interacts with CCNT2. Interacts (via C-terminus) with Piezo channel composed of PIEZO1 or PIEZO2; the interaction prolongs Piezo channel inactivation.

Its subcellular location is the nucleus. The protein localises to the cytoplasm. Its function is as follows. Inhibits the transactivation activity of the Myod family of myogenic factors and represses myogenesis. Acts by associating with Myod family members and retaining them in the cytoplasm by masking their nuclear localization signals. Can also interfere with the DNA-binding activity of Myod family members. Plays an important role in trophoblast and chondrogenic differentiation. Regulates the transcriptional activity of TCF7L1/TCF3 by interacting directly with TCF7L1/TCF3 and preventing it from binding DNA. Binds to the axin complex, resulting in an increase in the level of free beta-catenin. Affects axin regulation of the WNT and JNK signaling pathways. Regulates the activity of mechanosensitive Piezo channel. The sequence is that of MyoD family inhibitor (MDFI) from Homo sapiens (Human).